We begin with the raw amino-acid sequence, 950 residues long: Coatomer subunit beta-2 (950 aa).

HEAT repeat units lie at residues 92 to 126 (PEMI…LSEP), 127 to 164 (EVLE…LPHG), 275 to 312 (TAVR…TSHR), 313 to 350 (DVMV…ARNV), and 392 to 429 (EVAG…TNPK).

In terms of assembly, oligomeric complex that consists of at least the alpha, beta, beta', gamma, delta, epsilon and zeta subunits.

The protein resides in the cytoplasm. It localises to the golgi apparatus membrane. The protein localises to the cytoplasmic vesicle. It is found in the COPI-coated vesicle membrane. The coatomer is a cytosolic protein complex that binds to dilysine motifs and reversibly associates with Golgi non-clathrin-coated vesicles, which further mediate biosynthetic protein transport from the ER, via the Golgi up to the trans Golgi network. Coatomer complex is required for budding from Golgi membranes, and is essential for the retrograde Golgi-to-ER transport of dilysine-tagged proteins. The sequence is that of Coatomer subunit beta-2 from Oryza sativa subsp. japonica (Rice).